A 451-amino-acid chain; its full sequence is Eukaryotic translation initiation factor 3 subunit E (451 aa).

The 170-residue stretch at 256 to 425 (TDLFFSPAYI…GTVIMNHPPQ (170 aa)) folds into the PCI domain.

Belongs to the eIF-3 subunit E family. As to quaternary structure, component of the eukaryotic translation initiation factor 3 (eIF-3) complex.

The protein localises to the cytoplasm. In terms of biological role, component of the eukaryotic translation initiation factor 3 (eIF-3) complex, which is involved in protein synthesis of a specialized repertoire of mRNAs and, together with other initiation factors, stimulates binding of mRNA and methionyl-tRNAi to the 40S ribosome. The eIF-3 complex specifically targets and initiates translation of a subset of mRNAs involved in cell proliferation. This chain is Eukaryotic translation initiation factor 3 subunit E (int6), found in Aspergillus fumigatus (strain CBS 144.89 / FGSC A1163 / CEA10) (Neosartorya fumigata).